The sequence spans 126 residues: MDALKQTKFDDKNLIPAIVQDFKTGDILMFAWMNQESLALTIEKQQAVYYSRSRKKLWFKGEQSGHTQLIKEIFTDCDNDVILLRVDQVGGIACHTGRKSCFFQQLDKNNWKTVANVLKNPKDIYE.

Asp76 serves as a coordination point for Mg(2+). Residue Cys77 participates in Zn(2+) binding. Mg(2+) contacts are provided by Asp78 and Asp80. Residues Cys94 and Cys101 each contribute to the Zn(2+) site.

Belongs to the PRA-CH family. As to quaternary structure, homodimer. Mg(2+) is required as a cofactor. It depends on Zn(2+) as a cofactor.

Its subcellular location is the cytoplasm. The enzyme catalyses 1-(5-phospho-beta-D-ribosyl)-5'-AMP + H2O = 1-(5-phospho-beta-D-ribosyl)-5-[(5-phospho-beta-D-ribosylamino)methylideneamino]imidazole-4-carboxamide. It participates in amino-acid biosynthesis; L-histidine biosynthesis; L-histidine from 5-phospho-alpha-D-ribose 1-diphosphate: step 3/9. Catalyzes the hydrolysis of the adenine ring of phosphoribosyl-AMP. This is Phosphoribosyl-AMP cyclohydrolase from Ruthia magnifica subsp. Calyptogena magnifica.